We begin with the raw amino-acid sequence, 354 residues long: Holliday junction branch migration complex subunit RuvB (354 aa).

The segment at 1–22 (MTIQTDDFAPAPPRVVSAAPAS) is disordered. The tract at residues 5 to 193 (TDDFAPAPPR…FGIVARLEFY (189 aa)) is large ATPase domain (RuvB-L). ATP is bound by residues Leu32, Arg33, Gly74, Lys77, Thr78, Thr79, 140–142 (EDY), Arg183, Tyr193, and Arg230. Residue Thr78 coordinates Mg(2+). The segment at 194 to 264 (TPEELALIVR…IAHKALVMLD (71 aa)) is small ATPAse domain (RuvB-S). The head domain (RuvB-H) stretch occupies residues 267–354 (PQGFDLMDRK…RSDGQDLFGI (88 aa)). 3 residues coordinate DNA: Arg303, Arg322, and Arg327.

This sequence belongs to the RuvB family. In terms of assembly, homohexamer. Forms an RuvA(8)-RuvB(12)-Holliday junction (HJ) complex. HJ DNA is sandwiched between 2 RuvA tetramers; dsDNA enters through RuvA and exits via RuvB. An RuvB hexamer assembles on each DNA strand where it exits the tetramer. Each RuvB hexamer is contacted by two RuvA subunits (via domain III) on 2 adjacent RuvB subunits; this complex drives branch migration. In the full resolvosome a probable DNA-RuvA(4)-RuvB(12)-RuvC(2) complex forms which resolves the HJ.

The protein localises to the cytoplasm. The enzyme catalyses ATP + H2O = ADP + phosphate + H(+). Its function is as follows. The RuvA-RuvB-RuvC complex processes Holliday junction (HJ) DNA during genetic recombination and DNA repair, while the RuvA-RuvB complex plays an important role in the rescue of blocked DNA replication forks via replication fork reversal (RFR). RuvA specifically binds to HJ cruciform DNA, conferring on it an open structure. The RuvB hexamer acts as an ATP-dependent pump, pulling dsDNA into and through the RuvAB complex. RuvB forms 2 homohexamers on either side of HJ DNA bound by 1 or 2 RuvA tetramers; 4 subunits per hexamer contact DNA at a time. Coordinated motions by a converter formed by DNA-disengaged RuvB subunits stimulates ATP hydrolysis and nucleotide exchange. Immobilization of the converter enables RuvB to convert the ATP-contained energy into a lever motion, pulling 2 nucleotides of DNA out of the RuvA tetramer per ATP hydrolyzed, thus driving DNA branch migration. The RuvB motors rotate together with the DNA substrate, which together with the progressing nucleotide cycle form the mechanistic basis for DNA recombination by continuous HJ branch migration. Branch migration allows RuvC to scan DNA until it finds its consensus sequence, where it cleaves and resolves cruciform DNA. The sequence is that of Holliday junction branch migration complex subunit RuvB from Variovorax paradoxus (strain S110).